The sequence spans 1888 residues: E3 ubiquitin-protein ligase UPL3 (1888 aa).

Positions 1–10 are enriched in basic and acidic residues; the sequence is METRSRKRAE. Positions 1–157 are disordered; it reads METRSRKRAE…NGGFMHPNMS (157 aa). Residues 41-81 are compositionally biased toward low complexity; the sequence is LSSSSSSSLAPTPPSSSTTTRSRSSRSAAAAAPMDTSTDSS. Residues 97–124 are compositionally biased toward basic and acidic residues; sequence NSDKGKEKEHDVRIRERERERDRAREQL. A compositionally biased stretch (acidic residues) spans 137 to 146; the sequence is DEDDDNDSED. ARM repeat units lie at residues 227–267, 270–310, 312–349, and 351–390; these read EDSL…HLCD, PSSC…KISQ, HPTACLRAGALMAVLSYLDFFSTGVQRVALSTAANMCK, and LPSDASDYVMEAVPLLTNLLQYHDSKVLEYASICLTRIAE. 4 disordered regions span residues 660 to 711, 970 to 1119, 1134 to 1157, and 1280 to 1307; these read KPSH…IGAN, ALKP…LPMC, DDDGLATSGRQMNPASGGTSGAAA, and RLSVGGASSTTPSKSTKSATTNSSVESQ. The segment covering 986–1002 has biased composition (low complexity); that stretch reads PSGAGVSSPSSSTPAST. Residues 1019–1029 are compositionally biased toward basic and acidic residues; the sequence is TSKKDPVHEKG. Over residues 1076–1113 the composition is skewed to acidic residues; that stretch reads SSEDEELEISPVDIDDALVIEEDDISDDEDDDNEDVLD. 2 stretches are compositionally biased toward low complexity: residues 1148–1157 and 1286–1303; these read ASGGTSGAAA and ASSTTPSKSTKSATTNSS. Residues 1377 to 1451 form a K-box region; sequence AKVPLDEFVN…ALNRLQQQQG (75 aa). One can recognise an HECT domain in the interval 1490-1888; it reads MYSSQKAVLE…NEGQGSFDLS (399 aa). Cys1855 serves as the catalytic Glycyl thioester intermediate.

It belongs to the UPL family. K-HECT subfamily. As to expression, widely expressed.

The enzyme catalyses S-ubiquitinyl-[E2 ubiquitin-conjugating enzyme]-L-cysteine + [acceptor protein]-L-lysine = [E2 ubiquitin-conjugating enzyme]-L-cysteine + N(6)-ubiquitinyl-[acceptor protein]-L-lysine.. The protein operates within protein modification; protein ubiquitination. Probable E3 ubiquitin-protein ligase which mediates ubiquitination and subsequent proteasomal degradation of target proteins. Involved in the repression of endoreduplication process and the cell morphogenesis in the trichomes. This chain is E3 ubiquitin-protein ligase UPL3 (UPL3), found in Arabidopsis thaliana (Mouse-ear cress).